The chain runs to 316 residues: MANLKEIRDRIVSVKNTRKITEAMRLVAAAKVRRAQDQVLKSRPFADKLARVLENIQSRVQFEAVDSPLLSKREVKSISLVCITADRGLCGGYNTNIIKKVEIRYAELIKQGYEPNLILVGKKAIGYFQNRKDKYVIKSTFKELEQVPTAIDSEGITNEVLAEFLSENSDRVEIIYTKFITLVSCAPVVQTLLPLDPQGIAQENDEIFRLTTKNSKLLVEKSNLEKNESDRLPSDIVFEQSPDQLLDSLLPLYLQNQILRALQESAASELACRMTAMNNASDNAKELASTLNLTYNKARQAAITQEILEVVGGSAV.

The protein belongs to the ATPase gamma chain family. In terms of assembly, F-type ATPases have 2 components, CF(1) - the catalytic core - and CF(0) - the membrane proton channel. CF(1) has five subunits: alpha(3), beta(3), gamma(1), delta(1), epsilon(1). CF(0) has three main subunits: a, b and c.

It is found in the cellular thylakoid membrane. In terms of biological role, produces ATP from ADP in the presence of a proton gradient across the membrane. The gamma chain is believed to be important in regulating ATPase activity and the flow of protons through the CF(0) complex. This chain is ATP synthase gamma chain, found in Prochlorococcus marinus (strain MIT 9515).